A 201-amino-acid polypeptide reads, in one-letter code: 3-isopropylmalate dehydratase small subunit (201 aa).

It belongs to the LeuD family. LeuD type 1 subfamily. Heterodimer of LeuC and LeuD.

It carries out the reaction (2R,3S)-3-isopropylmalate = (2S)-2-isopropylmalate. It functions in the pathway amino-acid biosynthesis; L-leucine biosynthesis; L-leucine from 3-methyl-2-oxobutanoate: step 2/4. Its function is as follows. Catalyzes the isomerization between 2-isopropylmalate and 3-isopropylmalate, via the formation of 2-isopropylmaleate. This is 3-isopropylmalate dehydratase small subunit from Thermus thermophilus (strain ATCC BAA-163 / DSM 7039 / HB27).